A 431-amino-acid chain; its full sequence is Inactive polypeptide N-acetylgalactosaminyltransferase-like protein 5 (431 aa).

The Cytoplasmic portion of the chain corresponds to 1–4 (MKSV). The helical; Signal-anchor for type II membrane protein transmembrane segment at 5–27 (IIQGLFCGFLAIGLWASMLLLFL) threads the bilayer. At 28-431 (HLEQEDMLEN…TERKRKKNRF (404 aa)) the chain is on the lumenal side. An N-linked (GlcNAc...) asparagine glycan is attached at asparagine 68. Cystine bridges form between cysteine 105/cysteine 336 and cysteine 327/cysteine 403. The tract at residues 114 to 224 (LPTASIIICF…RVWLEPLLHA (111 aa)) is catalytic subdomain A. The segment at 282–344 (PIRSPAMTGG…PCSRVGYNSK (63 aa)) is catalytic subdomain B. 2 N-linked (GlcNAc...) asparagine glycosylation sites follow: asparagine 353 and asparagine 390.

The protein belongs to the glycosyltransferase 2 family. GalNAc-T subfamily. Mn(2+) serves as cofactor. Expressed in testis. Mainly expressed in the round and elongated spermatids during spermiogenesis, not in the outermost cells of the seminiferous tubules, which contain spermatogonia and somatic Sertoli cells. Present in the juxtanuclear space in the round spermatids, not in the acrosomal vesicles. In the elongating spermatids, localizes strongly in the acroplaxome, the region between the developing acrosome and nucleus. During differentiation, also weakly detected in the transient manchette containing microtubules. In epididymal spermatozoa, weakly detected in the midpiece, but concentrates mainly in the neck region around the head-tail coupling apparatus (at protein level).

It is found in the late endosome membrane. Probable inactive glycosyltransferase required during spermatid development. May participate in protein loading into the acrosomes and accumulation of ubiquitin-proteasome systems around the head-tail coupling apparatus region. The chain is Inactive polypeptide N-acetylgalactosaminyltransferase-like protein 5 (Galntl5) from Mus musculus (Mouse).